Reading from the N-terminus, the 267-residue chain is Probable proteasome subunit beta type-2 (267 aa).

Residues 1-35 (MMGINERKGFDFEYYQRNLLLQEKGFPTPKATSTG) constitute a propeptide, removed in mature form. Catalysis depends on threonine 36, which acts as the Nucleophile.

It belongs to the peptidase T1B family. As to quaternary structure, the 26S proteasome consists of a 20S proteasome core and two 19S regulatory subunits. The 20S proteasome core is composed of 28 subunits that are arranged in four stacked rings, resulting in a barrel-shaped structure. The two end rings are each formed by seven alpha subunits, and the two central rings are each formed by seven beta subunits. The catalytic chamber with the active sites is on the inside of the barrel.

It is found in the cytoplasm. The protein localises to the nucleus. It catalyses the reaction Cleavage of peptide bonds with very broad specificity.. Its function is as follows. The proteasome is a multicatalytic proteinase complex which is characterized by its ability to cleave peptides with Arg, Phe, Tyr, Leu, and Glu adjacent to the leaving group at neutral or slightly basic pH. The proteasome has an ATP-dependent proteolytic activity (Potential). This is Probable proteasome subunit beta type-2 (pup1) from Schizosaccharomyces pombe (strain 972 / ATCC 24843) (Fission yeast).